The primary structure comprises 334 residues: Nucleoid-associated protein PMI0825 (334 aa).

It belongs to the YejK family.

It localises to the cytoplasm. It is found in the nucleoid. In Proteus mirabilis (strain HI4320), this protein is Nucleoid-associated protein PMI0825.